Consider the following 179-residue polypeptide: Bifunctional protein PyrR (179 aa).

The short motif at 97–109 is the PRPP-binding element; that stretch reads VILIDDVLFTGRT.

It belongs to the purine/pyrimidine phosphoribosyltransferase family. PyrR subfamily.

It carries out the reaction UMP + diphosphate = 5-phospho-alpha-D-ribose 1-diphosphate + uracil. In terms of biological role, regulates the transcription of the pyrimidine nucleotide (pyr) operon in response to exogenous pyrimidines. Its function is as follows. Also displays a weak uracil phosphoribosyltransferase activity which is not physiologically significant. This is Bifunctional protein PyrR from Actinobacillus pleuropneumoniae serotype 5b (strain L20).